The chain runs to 548 residues: Tau-cadinol synthase (548 aa).

The Mg(2+) site is built by Asp-303 and Asp-307. 3 residues coordinate substrate: Asp-303, Asp-307, and Arg-443. Positions 303–307 (DDTYD) match the DDXXD motif motif.

It belongs to the terpene synthase family. As to quaternary structure, monomer. Mg(2+) serves as cofactor. It depends on Mn(2+) as a cofactor. In terms of tissue distribution, constitutively expressed in aerial tissues, but barely observed in roots.

Its subcellular location is the cytoplasm. The catalysed reaction is (2E,6E)-farnesyl diphosphate + H2O = tau-cadinol + diphosphate. The protein operates within secondary metabolite biosynthesis; terpenoid biosynthesis. Functionally, sesquiterpene synthase that catalyzes the formation of a blend of sesquiterpenes and sesquiterpenoid alcohols. Converts farnesyl diphosphate to tau-cadinol. This Zea mays (Maize) protein is Tau-cadinol synthase.